We begin with the raw amino-acid sequence, 454 residues long: tRNA-2-methylthio-N(6)-dimethylallyladenosine synthase (454 aa).

An MTTase N-terminal domain is found at 6-122; that stretch reads RRYHITTFGC…LKDLLESVFA (117 aa). Cys15, Cys51, Cys85, Cys157, Cys161, and Cys164 together coordinate [4Fe-4S] cluster. The Radical SAM core domain occupies 143-380; it reads RDSTVTAWVN…NHLVNVKAAE (238 aa). Residues 383–447 enclose the TRAM domain; that stretch reads QRYMGRIEEV…AFSLTGEPIE (65 aa).

It belongs to the methylthiotransferase family. MiaB subfamily. As to quaternary structure, monomer. [4Fe-4S] cluster serves as cofactor.

Its subcellular location is the cytoplasm. The enzyme catalyses N(6)-dimethylallyladenosine(37) in tRNA + (sulfur carrier)-SH + AH2 + 2 S-adenosyl-L-methionine = 2-methylsulfanyl-N(6)-dimethylallyladenosine(37) in tRNA + (sulfur carrier)-H + 5'-deoxyadenosine + L-methionine + A + S-adenosyl-L-homocysteine + 2 H(+). Catalyzes the methylthiolation of N6-(dimethylallyl)adenosine (i(6)A), leading to the formation of 2-methylthio-N6-(dimethylallyl)adenosine (ms(2)i(6)A) at position 37 in tRNAs that read codons beginning with uridine. The sequence is that of tRNA-2-methylthio-N(6)-dimethylallyladenosine synthase from Nostoc sp. (strain PCC 7120 / SAG 25.82 / UTEX 2576).